We begin with the raw amino-acid sequence, 317 residues long: Ubiquinone biosynthesis protein COQ9, mitochondrial (317 aa).

The N-terminal 46 residues, 1–46 (MAASVARVLKAAGGRQLLLMVARRRPVLRQPFLLMPRKFWGTSALR), are a transit peptide targeting the mitochondrion. A disordered region spans residues 45-97 (LRSEDQKQPPFSSTSAHAGTPEHAEEQYQQQQPPPRYTDQAGEESEGYESEEQ). Over residues 85 to 96 (AGEESEGYESEE) the composition is skewed to acidic residues. Arg243 provides a ligand contact to a 1,2-diacylglycero-3-phosphoethanolamine.

It belongs to the COQ9 family. In terms of assembly, homodimer. Heterodimer; two heterodimers of COQ7:COQ9 come together on the same side of the lipid pseudo-bilayer and form a curved tetramer with a hydrophobic surface suitable for membrane interaction. These two tetramers assemble into a soluble octamer with a pseudo-bilayer of lipids captured within. Interacts with COQ7; this interaction allows ubiquinone (CoQ) isoprene intermediates presentation to COQ7 and facilitates the COQ7-mediated hydroxylase step.

It localises to the mitochondrion. The protein operates within cofactor biosynthesis; ubiquinone biosynthesis. Its function is as follows. Membrane-associated protein that warps the membrane surface to access and bind aromatic isoprenes with high specificity, including ubiquinone (CoQ) isoprene intermediates and presents them directly to COQ7, therefore facilitating the COQ7-mediated hydroxylase step. Participates in the biosynthesis of coenzyme Q, also named ubiquinone, an essential lipid-soluble electron transporter for aerobic cellular respiration. This is Ubiquinone biosynthesis protein COQ9, mitochondrial from Xenopus tropicalis (Western clawed frog).